We begin with the raw amino-acid sequence, 617 residues long: Protein fem-1 homolog C (617 aa).

Met-1 is modified (N-acetylmethionine). ANK repeat units lie at residues 2-31 (DLKT…KEEV), 40-70 (NGAT…SIEV), 82-111 (EGAP…SVNN), 115-144 (TNST…DLEV), 148-177 (HGHT…DVNR), 181-210 (KGNT…KMEK), and 213-242 (YGMT…TSKT). TPR repeat units lie at residues 245 to 279 (INAL…RYSD) and 338 to 371 (SYYI…QQSN). 2 ANK repeats span residues 481-523 (NNFS…DVNV) and 527-556 (DDNS…HFDA).

Belongs to the fem-1 family. As to quaternary structure, component of a Cul2-RING (CRL2) E3 ubiquitin-protein ligase complex, also named ECS (Elongin BC-CUL2/5-SOCS-box protein) complex, composed of CUL2, Elongin BC (ELOB and ELOC), RBX1 and substrate-specific adapter FEM1C. Widely expressed. Highly expressed in kidney, cardiac tissue, skeletal muscle and testis. Expressed at lower levels in other tissues, including cartilage.

The protein operates within protein modification; protein ubiquitination. Substrate-recognition component of a Cul2-RING (CRL2) E3 ubiquitin-protein ligase complex of the DesCEND (destruction via C-end degrons) pathway, which recognizes a C-degron located at the extreme C terminus of target proteins, leading to their ubiquitination and degradation. The C-degron recognized by the DesCEND pathway is usually a motif of less than ten residues and can be present in full-length proteins, truncated proteins or proteolytically cleaved forms. The CRL2(FEM1C) complex specifically recognizes proteins with an arginine at the C-terminus: recognizes and binds proteins ending with -Lys/Arg-Xaa-Arg and -Lys/Arg-Xaa-Xaa-Arg C-degrons, such as SIL1 or OR51B2, leading to their ubiquitination and degradation. The CRL2(FEM1C) complex mediates ubiquitination and degradation of truncated MSRB1/SEPX1 selenoproteins produced by failed UGA/Sec decoding. Promotes ubiquitination and degradation of SLBP. The protein is Protein fem-1 homolog C of Homo sapiens (Human).